Here is a 1154-residue protein sequence, read N- to C-terminus: BEACH domain-containing protein lvsF (1154 aa).

2 disordered regions span residues 92-123 (HLPT…EQPS) and 139-167 (TSKV…PTPT). Positions 145 to 158 (PTPPTPTPTPPTPQ) are enriched in pro residues. Residues 289 to 384 (DMNERNILEL…TRNQVYDLLV (96 aa)) enclose the BEACH-type PH domain. The BEACH domain occupies 389–697 (TNIMHINEQA…QIFKTPHPQR (309 aa)). 3 disordered regions span residues 554–575 (SFES…NFEN), 739–762 (NNLN…LNNN), and 779–825 (NSLN…ENLN). Low complexity-rich tracts occupy residues 779 to 788 (NSLNNENNEN) and 795 to 822 (NSNS…NENE). WD repeat units follow at residues 858 to 897 (LHKD…QIRS), 900 to 939 (LCNL…ISYS), 942 to 980 (GHSD…NGAI), 992 to 1031 (DSDT…LIRR), 1034 to 1074 (CFFD…FSFK), 1076 to 1110 (KGEI…EIKD), and 1119 to 1154 (SSNE…IWQQ).

This Dictyostelium discoideum (Social amoeba) protein is BEACH domain-containing protein lvsF (lvsF).